We begin with the raw amino-acid sequence, 198 residues long: GTP cyclohydrolase-2 (198 aa).

Residue 52–56 (RMHSE) participates in GTP binding. Residues C57, C68, and C70 each coordinate Zn(2+). GTP-binding positions include Q73, 94 to 96 (EGR), and T116. Residue D128 is the Proton acceptor of the active site. The active-site Nucleophile is the R130. Residues T151 and K156 each contribute to the GTP site.

It belongs to the GTP cyclohydrolase II family. Zn(2+) is required as a cofactor.

The enzyme catalyses GTP + 4 H2O = 2,5-diamino-6-hydroxy-4-(5-phosphoribosylamino)-pyrimidine + formate + 2 phosphate + 3 H(+). It participates in cofactor biosynthesis; riboflavin biosynthesis; 5-amino-6-(D-ribitylamino)uracil from GTP: step 1/4. Functionally, catalyzes the conversion of GTP to 2,5-diamino-6-ribosylamino-4(3H)-pyrimidinone 5'-phosphate (DARP), formate and pyrophosphate. The sequence is that of GTP cyclohydrolase-2 from Vibrio cholerae serotype O1 (strain ATCC 39315 / El Tor Inaba N16961).